Here is a 306-residue protein sequence, read N- to C-terminus: Acetaldehyde dehydrogenase (306 aa).

Catalysis depends on C131, which acts as the Acyl-thioester intermediate. Residues 162 to 170 (SAGPGTRKN) and N273 contribute to the NAD(+) site.

The protein belongs to the acetaldehyde dehydrogenase family.

The enzyme catalyses acetaldehyde + NAD(+) + CoA = acetyl-CoA + NADH + H(+). The sequence is that of Acetaldehyde dehydrogenase from Albidiferax ferrireducens (strain ATCC BAA-621 / DSM 15236 / T118) (Rhodoferax ferrireducens).